Consider the following 684-residue polypeptide: Endo-1,4-beta-xylanase A (684 aa).

A signal peptide spans 1–34 (MMRSLKSRKLVFILAMLFLINAIVSLKFITYSSA). CBM-cenC domains follow at residues 40-190 (KSKY…IKDL) and 193-342 (AYVL…ISDE). In terms of domain architecture, GH10 spans 350-678 (DYNLPSLCEK…KFAFWSLIDP (329 aa)). The active-site Proton donor is the Glu490. Glu598 functions as the Nucleophile in the catalytic mechanism.

This sequence belongs to the glycosyl hydrolase 10 (cellulase F) family.

The catalysed reaction is Endohydrolysis of (1-&gt;4)-beta-D-xylosidic linkages in xylans.. It functions in the pathway glycan degradation; xylan degradation. This Caldicellulosiruptor sp. (strain Rt8B.4) protein is Endo-1,4-beta-xylanase A (xynA).